Reading from the N-terminus, the 48-residue chain is Lantibiotic salivaricin-A (48 aa).

The propeptide occupies 1 to 26 (MKNSKDILNNAIEEVSEKELMEVAGG). 2 consecutive cross-links (beta-methyllanthionine (Thr-Cys)) follow at residues 35–40 (TITDDC) and 37–47 (TDDCPNSVFVC). The segment at residues 43–48 (SVFVCC) is a cross-link (lanthionine (Ser-Cys)).

This sequence belongs to the type A lantibiotic family. Post-translationally, maturation of lantibiotics involves the enzymatic conversion of Thr, and Ser into dehydrated AA and the formation of thioether bonds with cysteine. This is followed by membrane translocation and cleavage of the modified precursor.

In terms of biological role, lanthionine-containing peptide antibiotic (lantibiotic) active on Gram-positive bacteria. The bactericidal activity of lantibiotics is based on depolarization of energized bacterial cytoplasmic membranes, initiated by the formation of aqueous transmembrane pores. This chain is Lantibiotic salivaricin-A (salA), found in Streptococcus salivarius.